A 341-amino-acid chain; its full sequence is Serine/threonine-protein kinase PDIK1L (341 aa).

The region spanning 8-334 is the Protein kinase domain; sequence YDLIREVGRG…LELRLVQIAF (327 aa). ATP is bound by residues 14–22 and Lys-37; that span reads VGRGSYGVV. The active-site Proton acceptor is the Asp-164.

Belongs to the protein kinase superfamily. Ser/Thr protein kinase family.

It localises to the nucleus. It catalyses the reaction L-seryl-[protein] + ATP = O-phospho-L-seryl-[protein] + ADP + H(+). The enzyme catalyses L-threonyl-[protein] + ATP = O-phospho-L-threonyl-[protein] + ADP + H(+). This chain is Serine/threonine-protein kinase PDIK1L (Pdik1l), found in Mus musculus (Mouse).